The primary structure comprises 374 residues: uncharacterized protein (374 aa).

Positions 39 to 66 (RDVRKHLESRDAKQELIDSLEEAVRDSR) form a coiled coil.

This is an uncharacterized protein from Mycobacterium tuberculosis (strain CDC 1551 / Oshkosh).